Consider the following 477-residue polypeptide: ATP synthase subunit beta (477 aa).

151 to 158 is an ATP binding site; that stretch reads GGAGVGKT.

It belongs to the ATPase alpha/beta chains family. F-type ATPases have 2 components, CF(1) - the catalytic core - and CF(0) - the membrane proton channel. CF(1) has five subunits: alpha(3), beta(3), gamma(1), delta(1), epsilon(1). CF(0) has three main subunits: a(1), b(2) and c(9-12). The alpha and beta chains form an alternating ring which encloses part of the gamma chain. CF(1) is attached to CF(0) by a central stalk formed by the gamma and epsilon chains, while a peripheral stalk is formed by the delta and b chains.

Its subcellular location is the cell inner membrane. It carries out the reaction ATP + H2O + 4 H(+)(in) = ADP + phosphate + 5 H(+)(out). In terms of biological role, produces ATP from ADP in the presence of a proton gradient across the membrane. The catalytic sites are hosted primarily by the beta subunits. The polypeptide is ATP synthase subunit beta (Bradyrhizobium diazoefficiens (strain JCM 10833 / BCRC 13528 / IAM 13628 / NBRC 14792 / USDA 110)).